Reading from the N-terminus, the 122-residue chain is Large ribosomal subunit protein bL12 (122 aa).

Belongs to the bacterial ribosomal protein bL12 family. Homodimer. Part of the ribosomal stalk of the 50S ribosomal subunit. Forms a multimeric L10(L12)X complex, where L10 forms an elongated spine to which 2 to 4 L12 dimers bind in a sequential fashion. Binds GTP-bound translation factors.

Functionally, forms part of the ribosomal stalk which helps the ribosome interact with GTP-bound translation factors. Is thus essential for accurate translation. This Latilactobacillus sakei subsp. sakei (strain 23K) (Lactobacillus sakei subsp. sakei) protein is Large ribosomal subunit protein bL12.